We begin with the raw amino-acid sequence, 259 residues long: Cell division protein FtsQ (259 aa).

Over 1–15 (MTRDQTATFGRHALR) the chain is Cytoplasmic. The helical transmembrane segment at 16–36 (VAGSGLLVAGVVALGLLGWQW) threads the bilayer. Residues 37-259 (RANVTVDRVA…VVTRTRPLDG (223 aa)) lie on the Periplasmic side of the membrane. A POTRA domain is found at 40 to 109 (VTVDRVAVTG…GALTISVTER (70 aa)).

The protein belongs to the FtsQ/DivIB family. FtsQ subfamily.

The protein resides in the cell inner membrane. Essential cell division protein. This Salinibacter ruber (strain DSM 13855 / M31) protein is Cell division protein FtsQ.